The following is a 190-amino-acid chain: Protein GrpE (190 aa).

Over residues 1–18 (MTETPNTSSEEIQTSEPS) the composition is skewed to polar residues. Residues 1–21 (MTETPNTSSEEIQTSEPSPDN) are disordered.

The protein belongs to the GrpE family. As to quaternary structure, homodimer.

The protein localises to the cytoplasm. In terms of biological role, participates actively in the response to hyperosmotic and heat shock by preventing the aggregation of stress-denatured proteins, in association with DnaK and GrpE. It is the nucleotide exchange factor for DnaK and may function as a thermosensor. Unfolded proteins bind initially to DnaJ; upon interaction with the DnaJ-bound protein, DnaK hydrolyzes its bound ATP, resulting in the formation of a stable complex. GrpE releases ADP from DnaK; ATP binding to DnaK triggers the release of the substrate protein, thus completing the reaction cycle. Several rounds of ATP-dependent interactions between DnaJ, DnaK and GrpE are required for fully efficient folding. This Chlamydia trachomatis serovar L2b (strain UCH-1/proctitis) protein is Protein GrpE.